The primary structure comprises 78 residues: Large ribosomal subunit protein bL28 (78 aa).

Residues 1–22 (MAKVCQVTGKRPVTGHNVSHAK) are disordered.

It belongs to the bacterial ribosomal protein bL28 family.

This Saccharophagus degradans (strain 2-40 / ATCC 43961 / DSM 17024) protein is Large ribosomal subunit protein bL28.